Reading from the N-terminus, the 277-residue chain is MAPLRFSANVSWLFPELPGLPERLHAAGRAGFKAAEVAWPYTESPQALASAAQTAGLRLVLINTPRGDHEKGEMGLGAVPGRQAAFREGLEQAVLYAKALGCPRIHLMAGRVPQGADRAAVKGEMETVFVENLKHAAGVLAQENLVGLLEPINTRITDPQYFLDTPRQAAAILQKVGRPNLQLQMDIFHWQIMDGNLTGNIREFLPTVGHVQVAQVPDRGEPGSSGELDFTYLFQLLEDEGYQGFVGCEYRPRGDTVEGLSWLRSYWDRRGHPRTGQ.

Residues Glu-150 and Glu-249 each act as proton donor/acceptor in the active site.

Belongs to the hyi family.

The catalysed reaction is 3-hydroxypyruvate = 2-hydroxy-3-oxopropanoate. In terms of biological role, catalyzes the reversible isomerization between hydroxypyruvate and 2-hydroxy-3-oxopropanoate (also termed tartronate semialdehyde). The sequence is that of Putative hydroxypyruvate isomerase (Hyi) from Mus musculus (Mouse).